A 103-amino-acid polypeptide reads, in one-letter code: Small ribosomal subunit protein uS10 (103 aa).

This sequence belongs to the universal ribosomal protein uS10 family. Part of the 30S ribosomal subunit.

Involved in the binding of tRNA to the ribosomes. The chain is Small ribosomal subunit protein uS10 from Aliivibrio fischeri (strain ATCC 700601 / ES114) (Vibrio fischeri).